The following is a 1722-amino-acid chain: MRTGWATPRRPAGLLMLLFWFFDLAEPSGRAANDPFTIVHGNTGKCIKPVYGWIVADDCDETEDKLWKWVSQHRLFHLHSQKCLGLDITKSVNELRMFSCDSSAMLWWKCEHHSLYGAARYRLALKDGHGTAISNASDVWKKGGSEESLCDQPYHEIYTRDGNSYGRPCEFPFLIDGTWHHDCILDEDHSGPWCATTLNYEYDRKWGICLKPENGCEDNWEKNEQFGSCYQFNTQTALSWKEAYVSCQNQGADLLSINSAAELTYLKEKEGIAKIFWIGLNQLYSARGWEWSDHKPLNFLNWDPDRPSAPTIGGSSCARMDAESGLWQSFSCEAQLPYVCRKPLNNTVELTDVWTYSDTRCDAGWLPNNGFCYLLVNESNSWDKAHAKCKAFSSDLISIHSLADVEVVVTKLHNEDIKEEVWIGLKNINIPTLFQWSDGTEVTLTYWDENEPNVPYNKTPNCVSYLGELGQWKVQSCEEKLKYVCKRKGEKLNDASSDKMCPPDEGWKRHGETCYKIYEDEVPFGTNCNLTITSRFEQEYLNDLMKKYDKSLRKYFWTGLRDVDSCGEYNWATVGGRRRAVTFSNWNFLEPASPGGCVAMSTGKSVGKWEVKDCRSFKALSICKKMSGPLGPEEASPKPDDPCPEGWQSFPASLSCYKVFHAERIVRKRNWEEAERFCQALGAHLSSFSHVDEIKEFLHFLTDQFSGQHWLWIGLNKRSPDLQGSWQWSDRTPVSTIIMPNEFQQDYDIRDCAAVKVFHRPWRRGWHFYDDREFIYLRPFACDTKLEWVCQIPKGRTPKTPDWYNPDRAGIHGPPLIIEGSEYWFVADLHLNYEEAVLYCASNHSFLATITSFVGLKAIKNKIANISGDGQKWWIRISEWPIDDHFTYSRYPWHRFPVTFGEECLYMSAKTWLIDLGKPTDCSTKLPFICEKYNVSSLEKYSPDSAAKVQCSEQWIPFQNKCFLKIKPVSLTFSQASDTCHSYGGTLPSVLSQIEQDFITSLLPDMEATLWIGLRWTAYEKINKWTDNRELTYSNFHPLLVSGRLRIPENFFEEESRYHCALILNLQKSPFTGTWNFTSCSERHFVSLCQKYSEVKSRQTLQNASETVKYLNNLYKIIPKTLTWHSAKRECLKSNMQLVSITDPYQQAFLSVQALLHNSSLWIGLFSQDDELNFGWSDGKRLHFSRWAETNGQLEDCVVLDTDGFWKTVDCNDNQPGAICYYSGNETEKEVKPVDSVKCPSPVLNTPWIPFQNCCYNFIITKNRHMATTQDEVHTKCQKLNPKSHILSIRDEKENNFVLEQLLYFNYMASWVMLGITYRNKSLMWFDKTPLSYTHWRAGRPTIKNEKFLAGLSTDGFWDIQTFKVIEEAVYFHQHSILACKIEMVDYKEEYNTTLPQFMPYEDGIYSVIQKKVTWYEALNMCSQSGGHLASVHNQNGQLFLEDIVKRDGFPLWVGLSSHDGSESSFEWSDGSTFDYIPWKGQTSPGNCVLLDPKGTWKHEKCNSVKDGAICYKPTKSKKLSRLTYSSRCPAAKENGSRWIQYKGHCYKSDQALHSFSEAKKLCSKHDHSATIVSIKDEDENKFVSRLMRENNNITMRVWLGLSQHSVDQSWSWLDGSEVTFVKWENKSKSGVGRCSMLIASNETWKKVECEHGFGRVVCKVPLGPDYTAIAIIVATLSILVLMGGLIWFLFQRHRLHLAGFSSVRYAQGVNEDEIMLPSFHD.

The signal sequence occupies residues 1-27 (MRTGWATPRRPAGLLMLLFWFFDLAEP). The Extracellular portion of the chain corresponds to 28–1666 (SGRAANDPFT…VVCKVPLGPD (1639 aa)). Residues 33–156 (NDPFTIVHGN…ESLCDQPYHE (124 aa)) enclose the Ricin B-type lectin domain. The N-linked (GlcNAc...) asparagine glycan is linked to asparagine 135. Residues 164-211 (SYGRPCEFPFLIDGTWHHDCILDEDHSGPWCATTLNYEYDRKWGICLK) enclose the Fibronectin type-II domain. Cystine bridges form between cysteine 169–cysteine 194, cysteine 183–cysteine 209, cysteine 247–cysteine 340, and cysteine 317–cysteine 332. In terms of domain architecture, C-type lectin 1 spans 225 to 341 (QFGSCYQFNT…CEAQLPYVCR (117 aa)). N-linked (GlcNAc...) asparagine glycosylation is found at asparagine 345 and asparagine 377. C-type lectin domains are found at residues 368–486 (NNGF…YVCK), 493–625 (NDAS…ICKK), 652–778 (ASLS…IYLR), and 818–931 (IEGS…FICE). Disulfide bonds link cysteine 389–cysteine 485 and cysteine 462–cysteine 477. A glycan (N-linked (GlcNAc...) asparagine) is linked at asparagine 529. Cysteine 597 and cysteine 614 are joined by a disulfide. Cystine bridges form between cysteine 840-cysteine 930 and cysteine 904-cysteine 922. N-linked (GlcNAc...) asparagine glycans are attached at residues asparagine 843 and asparagine 865. Tyrosine 933 is modified (phosphotyrosine). Residues asparagine 934, asparagine 1076, and asparagine 1103 are each glycosylated (N-linked (GlcNAc...) asparagine). One can recognise a C-type lectin 6 domain in the interval 958–1091 (FQNKCFLKIK…ERHFVSLCQK (134 aa)). Cysteines 1060 and 1080 form a disulfide. Residues 1110-1222 (YLNNLYKIIP…DNQPGAICYY (113 aa)) form the C-type lectin 7 domain. A disulfide bridge connects residues cysteine 1197 and cysteine 1211. 3 N-linked (GlcNAc...) asparagine glycosylation sites follow: asparagine 1225, asparagine 1320, and asparagine 1392. The C-type lectin 8 domain occupies 1251–1374 (FQNCCYNFII…VIEEAVYFHQ (124 aa)). C-type lectin domains lie at 1401 to 1513 (YEDG…ICYK) and 1542 to 1661 (YKGH…VCKV). A disulfide bridge links cysteine 1488 with cysteine 1502. Asparagine 1593 and asparagine 1626 each carry an N-linked (GlcNAc...) asparagine glycan. Cysteine 1635 and cysteine 1650 are oxidised to a cystine. A helical transmembrane segment spans residues 1667 to 1691 (YTAIAIIVATLSILVLMGGLIWFLF). The Cytoplasmic portion of the chain corresponds to 1692–1722 (QRHRLHLAGFSSVRYAQGVNEDEIMLPSFHD). Phosphoserine occurs at positions 1703 and 1719.

N-glycosylated. Expressed in spleen, thymus, colon and peripheral blood lymphocytes. Detected in myeloid and B-lymphoid cell lines. Isoform 2 and isoform 3 are expressed in malignant Hodgkin lymphoma cells called Hodgkin and Reed-Sternberg (HRS) cells.

It localises to the membrane. Its function is as follows. Acts as an endocytic receptor to direct captured antigens from the extracellular space to a specialized antigen-processing compartment. Causes reduced proliferation of B-lymphocytes. The chain is Lymphocyte antigen 75 (LY75) from Homo sapiens (Human).